Reading from the N-terminus, the 240-residue chain is Ubiquinone biosynthesis O-methyltransferase (240 aa).

Residues Arg-44, Gly-64, Asp-85, and Met-129 each coordinate S-adenosyl-L-methionine.

Belongs to the methyltransferase superfamily. UbiG/COQ3 family.

The catalysed reaction is a 3-demethylubiquinol + S-adenosyl-L-methionine = a ubiquinol + S-adenosyl-L-homocysteine + H(+). The enzyme catalyses a 3-(all-trans-polyprenyl)benzene-1,2-diol + S-adenosyl-L-methionine = a 2-methoxy-6-(all-trans-polyprenyl)phenol + S-adenosyl-L-homocysteine + H(+). The protein operates within cofactor biosynthesis; ubiquinone biosynthesis. In terms of biological role, O-methyltransferase that catalyzes the 2 O-methylation steps in the ubiquinone biosynthetic pathway. This is Ubiquinone biosynthesis O-methyltransferase from Escherichia coli (strain ATCC 8739 / DSM 1576 / NBRC 3972 / NCIMB 8545 / WDCM 00012 / Crooks).